A 477-amino-acid polypeptide reads, in one-letter code: Ubiquitin carboxyl-terminal hydrolase 7 (477 aa).

The Ubiquitin-like domain maps to 2-77 (LTVSVKWQKK…LMMMGTADEI (76 aa)). A USP domain is found at 104 to 473 (AGLVNLGNTC…MAYIVMYKAR (370 aa)). The active-site Nucleophile is the C113. Residues 171 to 190 (MPFWMVLQKKYPQFAQLHNG) are calmodulin-binding. Residues 364–401 (QASAKSSSKGDDVKMTDAEGSSNQSGESSTGDQQEGAS) form a disordered region. A compositionally biased stretch (basic and acidic residues) spans 371–380 (SKGDDVKMTD). The segment covering 382 to 399 (EGSSNQSGESSTGDQQEG) has biased composition (polar residues). The active-site Proton acceptor is the H425.

This sequence belongs to the peptidase C19 family. In terms of assembly, interacts with calmodulin (CaM).

It carries out the reaction Thiol-dependent hydrolysis of ester, thioester, amide, peptide and isopeptide bonds formed by the C-terminal Gly of ubiquitin (a 76-residue protein attached to proteins as an intracellular targeting signal).. Functionally, recognizes and hydrolyzes the peptide bond at the C-terminal Gly of ubiquitin. Involved in the processing of poly-ubiquitin precursors as well as that of ubiquitinated proteins. The chain is Ubiquitin carboxyl-terminal hydrolase 7 (UBP7) from Arabidopsis thaliana (Mouse-ear cress).